The sequence spans 533 residues: Glycogen synthase (533 aa).

Residue K12 coordinates ADP-alpha-D-glucose. Residues A497–K533 are disordered. Residues A512–A525 show a composition bias toward basic and acidic residues.

This sequence belongs to the glycosyltransferase 1 family. Bacterial/plant glycogen synthase subfamily.

It catalyses the reaction [(1-&gt;4)-alpha-D-glucosyl](n) + ADP-alpha-D-glucose = [(1-&gt;4)-alpha-D-glucosyl](n+1) + ADP + H(+). Its pathway is glycan biosynthesis; glycogen biosynthesis. Functionally, synthesizes alpha-1,4-glucan chains using ADP-glucose. In Burkholderia thailandensis (strain ATCC 700388 / DSM 13276 / CCUG 48851 / CIP 106301 / E264), this protein is Glycogen synthase.